A 228-amino-acid chain; its full sequence is MGEPQQVSALPIPPMQYIKEYTDENIRKGLAPKPPLPINDSYMMFGNQFQCDDLIIRPLETQGIERLHPVQFDHKKELRKLLMSILVNFLDMLDILIRSPGSIRREEKLEDIKLLFVHMHHLINEYRPHQARETLRVMMEVQKRQRLETAERFQKHLERVVEMIQNCLASLPDDLPLPNGADSVKTEPMDVQEPCTDHYKGSQEAAASMKEATIDKDAAMCVIIDEMT.

This sequence belongs to the Mediator complex subunit 7 family. Component of the Mediator complex.

The protein localises to the nucleus. Functionally, component of the Mediator complex, a coactivator involved in the regulated transcription of nearly all RNA polymerase II-dependent genes. Mediator functions as a bridge to convey information from gene-specific regulatory proteins to the basal RNA polymerase II transcription machinery. Mediator is recruited to promoters by direct interactions with regulatory proteins and serves as a scaffold for the assembly of a functional preinitiation complex with RNA polymerase II and the general transcription factors. The polypeptide is Mediator of RNA polymerase II transcription subunit 7-B (med7-b) (Xenopus laevis (African clawed frog)).